The chain runs to 158 residues: Cyclic pyranopterin monophosphate synthase (158 aa).

Substrate is bound by residues 75–77 (LCH) and 113–114 (ME). Asp-128 is an active-site residue.

This sequence belongs to the MoaC family. As to quaternary structure, homohexamer; trimer of dimers.

It carries out the reaction (8S)-3',8-cyclo-7,8-dihydroguanosine 5'-triphosphate = cyclic pyranopterin phosphate + diphosphate. The protein operates within cofactor biosynthesis; molybdopterin biosynthesis. Functionally, catalyzes the conversion of (8S)-3',8-cyclo-7,8-dihydroguanosine 5'-triphosphate to cyclic pyranopterin monophosphate (cPMP). The sequence is that of Cyclic pyranopterin monophosphate synthase from Azorhizobium caulinodans (strain ATCC 43989 / DSM 5975 / JCM 20966 / LMG 6465 / NBRC 14845 / NCIMB 13405 / ORS 571).